Here is an 874-residue protein sequence, read N- to C-terminus: GRB2-associated and regulator of MAPK protein 2 (874 aa).

The interval 12-339 (RWSMGAFPLD…LLAGDPRVER (328 aa)) is CABIT. Residues 188–206 (GGGGPASAGAAGGTGGGGA) are compositionally biased toward gly residues. Disordered stretches follow at residues 188-207 (GGGGPASAGAAGGTGGGGAR), 388-422 (PGLARAPGPLAPAPAGEGDQEYVSPDWAAAPEPAA), 437-545 (GPEG…SPSP), 563-598 (GESSSRPAPGPLPSTTQPSQASRALTEPLSGRAASL), and 625-742 (APFG…PSKA). 2 stretches are compositionally biased toward low complexity: residues 388–403 (PGLARAPGPLAPAPAG) and 518–545 (SPSSSLSYYSSGLQDGAGSRSGSGSPSP). Residues 575 to 585 (PSTTQPSQASR) are compositionally biased toward polar residues. 2 stretches are compositionally biased toward low complexity: residues 632-650 (PFSGPAYPSGPSAALSSGP) and 658-691 (ATSGPAYSPGPASPGQAYSAAPPSSCAPSSSSSS). Residue serine 735 is modified to Phosphoserine. An SAM domain is found at 807–871 (SALSLEEVSR…KIMQFIKGWR (65 aa)).

It belongs to the GAREM family.

Probable adapter protein that may provide a link between cell surface epidermal growth factor receptor and the MAPK/ERK signaling pathway. In Homo sapiens (Human), this protein is GRB2-associated and regulator of MAPK protein 2 (GAREM2).